We begin with the raw amino-acid sequence, 32 residues long: Cytochrome b6-f complex subunit 8 (32 aa).

Residues 6 to 26 (IVGITWAALMVVFTFSLSLVV) traverse the membrane as a helical segment.

The protein belongs to the PetN family. The 4 large subunits of the cytochrome b6-f complex are cytochrome b6, subunit IV (17 kDa polypeptide, PetD), cytochrome f and the Rieske protein, while the 4 small subunits are PetG, PetL, PetM and PetN. The complex functions as a dimer.

The protein localises to the plastid. It localises to the chloroplast thylakoid membrane. Functionally, component of the cytochrome b6-f complex, which mediates electron transfer between photosystem II (PSII) and photosystem I (PSI), cyclic electron flow around PSI, and state transitions. The polypeptide is Cytochrome b6-f complex subunit 8 (Pinus koraiensis (Korean pine)).